The primary structure comprises 380 residues: MLIVADENIPLLDAFFQGFGEIRRVPGRSLDRATVEQADVLLVRSVTNVNRALLEGSKVRFVGTCTIGTDHLDLDYFKQAGIQWSSAPGCNARGVVDYVLGSLQTLAEIEGADLNQRTYGVVGAGEVGGRLVKVLKGLGWNVLVCDPPRQIAEDGDYVSLAQIIEQCDVISLHTPLTKSGNGSTWHLFDRQRLEQLKPGTWLINASRGPVVDNAALREVLLAREDLQAVLDVWEGEPEVDVDLADLCVLATPHIAGYSLEGRQRGTAQIYQAFCAHLGQAPSILLSDLLPPPWLAEVHLNASTDPAWALATLCRSVYDPRRDDADFRRSLVGTVEEQRKAFDLLRKHYPARREIEGLKVRINGESTALASIVSALGAQAI.

2 residues coordinate substrate: Ser-45 and Thr-66. NAD(+)-binding positions include Asp-146, Thr-174, 205-207 (ASR), and Asp-231. Arg-207 is a catalytic residue. Glu-236 is a catalytic residue. His-253 (proton donor) is an active-site residue. Gly-256 is an NAD(+) binding site. Tyr-257 is a substrate binding site.

It belongs to the D-isomer specific 2-hydroxyacid dehydrogenase family. PdxB subfamily. Homodimer.

Its subcellular location is the cytoplasm. The enzyme catalyses 4-phospho-D-erythronate + NAD(+) = (R)-3-hydroxy-2-oxo-4-phosphooxybutanoate + NADH + H(+). It functions in the pathway cofactor biosynthesis; pyridoxine 5'-phosphate biosynthesis; pyridoxine 5'-phosphate from D-erythrose 4-phosphate: step 2/5. Its function is as follows. Catalyzes the oxidation of erythronate-4-phosphate to 3-hydroxy-2-oxo-4-phosphonooxybutanoate. The protein is Erythronate-4-phosphate dehydrogenase of Pseudomonas fluorescens (strain SBW25).